A 392-amino-acid chain; its full sequence is Chorismate synthase (392 aa).

Residues Arg40 and Arg46 each contribute to the NADP(+) site. Residues 135–137 (RAS), 256–257 (QA), Gly300, 315–319 (KPISS), and Arg341 each bind FMN.

This sequence belongs to the chorismate synthase family. Homotetramer. FMNH2 is required as a cofactor.

The enzyme catalyses 5-O-(1-carboxyvinyl)-3-phosphoshikimate = chorismate + phosphate. The protein operates within metabolic intermediate biosynthesis; chorismate biosynthesis; chorismate from D-erythrose 4-phosphate and phosphoenolpyruvate: step 7/7. In terms of biological role, catalyzes the anti-1,4-elimination of the C-3 phosphate and the C-6 proR hydrogen from 5-enolpyruvylshikimate-3-phosphate (EPSP) to yield chorismate, which is the branch point compound that serves as the starting substrate for the three terminal pathways of aromatic amino acid biosynthesis. This reaction introduces a second double bond into the aromatic ring system. This chain is Chorismate synthase, found in Salinispora tropica (strain ATCC BAA-916 / DSM 44818 / JCM 13857 / NBRC 105044 / CNB-440).